Here is a 104-residue protein sequence, read N- to C-terminus: Large ribosomal subunit protein uL24 (104 aa).

It belongs to the universal ribosomal protein uL24 family. In terms of assembly, part of the 50S ribosomal subunit.

In terms of biological role, one of two assembly initiator proteins, it binds directly to the 5'-end of the 23S rRNA, where it nucleates assembly of the 50S subunit. Functionally, one of the proteins that surrounds the polypeptide exit tunnel on the outside of the subunit. The protein is Large ribosomal subunit protein uL24 of Anaplasma phagocytophilum (strain HZ).